Here is an 833-residue protein sequence, read N- to C-terminus: EF-hand domain-containing family member B (833 aa).

EF-hand domains lie at 561 to 596 (QKFDTLLAAFRHYDKKGDGMIDKDELQEACDQANLS) and 597 to 632 (LDDKLLDQLFDYCDVDNDGFINYLEFANFLNWKDKM). Ca(2+) contacts are provided by Asp574, Asp578, Met580, Glu585, Asp610, Asp612, Asp614, and Glu621.

As to quaternary structure, microtubule inner protein component of sperm flagellar doublet microtubules. Interacts with STIM1 and ORAI1; the interactions take place upon Ca(2+)-store depletion and dissociate through a Ca(2+)-dependent mechanism. Interaction with STIM1 inhibits STIM1 interaction with SARAF. In terms of tissue distribution, expressed in airway epithelial cells.

The protein resides in the cytoplasm. It localises to the cytoskeleton. It is found in the cilium axoneme. The protein localises to the flagellum axoneme. In terms of biological role, microtubule inner protein (MIP) part of the dynein-decorated doublet microtubules (DMTs) in cilia axoneme, which is required for motile cilia beating. Cytosolic sensor for calcium, modulates the interaction of STIM1 and ORAI1 upon store depletion and the activation of store-operated Ca(2+) entry (SOCE) and NFAT translocation from cytosol to nucleus. This Homo sapiens (Human) protein is EF-hand domain-containing family member B.